The sequence spans 253 residues: 5'-nucleotidase SurE (253 aa).

Asp-8, Asp-9, Ser-40, and Asn-92 together coordinate a divalent metal cation.

This sequence belongs to the SurE nucleotidase family. It depends on a divalent metal cation as a cofactor.

It localises to the cytoplasm. The enzyme catalyses a ribonucleoside 5'-phosphate + H2O = a ribonucleoside + phosphate. Its function is as follows. Nucleotidase that shows phosphatase activity on nucleoside 5'-monophosphates. The chain is 5'-nucleotidase SurE from Hyphomonas neptunium (strain ATCC 15444).